Here is a 356-residue protein sequence, read N- to C-terminus: uncharacterized protein (356 aa).

This is an uncharacterized protein from Acanthamoeba polyphaga (Amoeba).